Reading from the N-terminus, the 210-residue chain is MATETVELHKLKLAELKQECLARGLETKGIKQDLINRLQAYLEEHAEEEANEEDVLGDETEEEEPKPIELPVKEEEPPEKVVDMASEKKVVKITSGIPQTERMQKRAERFNVPVSLESKKAARAARFGISSVPTKGLSSDTKPMVNLDKLKERAQRFGLNVSSISRKSEDDEKLKKRKERFGIVTSSAGTGTTEDTEAKKRKRAERFGIA.

A2 is modified (N-acetylalanine). Residues 8 to 42 (LHKLKLAELKQECLARGLETKGIKQDLINRLQAYL) form the SAP domain. Residue K10 is modified to N6-acetyllysine. Acidic residues predominate over residues 45-64 (HAEEEANEEDVLGDETEEEE). Positions 45–87 (HAEEEANEEDVLGDETEEEEPKPIELPVKEEEPPEKVVDMASE) are disordered. Positions 65-87 (PKPIELPVKEEEPPEKVVDMASE) are enriched in basic and acidic residues. N6-acetyllysine is present on K142. The disordered stretch occupies residues 161 to 210 (VSSISRKSEDDEKLKKRKERFGIVTSSAGTGTTEDTEAKKRKRAERFGIA). A Phosphoserine modification is found at S163. A compositionally biased stretch (polar residues) spans 184-193 (VTSSAGTGTT).

Belongs to the SAP domain-containing ribonucleoprotein family. As to quaternary structure, interacts with DDX39A. Interacts with FUS. Interacts (via the C-terminal domain) with DDX39B; the interaction is direct and facilitates RNA binding of DDX39B. Component of the transcription/export (TREX) complex at least composed of ALYREF/THOC4, DDX39B, SARNP/CIP29, CHTOP and the THO subcomplex; TREX seems to have dynamic structure involving ATP-dependent remodeling; in the complex interacts directly with DDX39B in a ATP-dependent manner which bridges it to ALYREF/THOC4.

The protein resides in the nucleus. It localises to the nucleus speckle. In terms of biological role, binds both single-stranded and double-stranded DNA with higher affinity for the single-stranded form. Specifically binds to scaffold/matrix attachment region DNA. Also binds single-stranded RNA. Enhances RNA unwinding activity of DDX39A. May participate in important transcriptional or translational control of cell growth, metabolism and carcinogenesis. Component of the TREX complex which is thought to couple mRNA transcription, processing and nuclear export, and specifically associates with spliced mRNA and not with unspliced pre-mRNA. The TREX complex is recruited to spliced mRNAs by a transcription-independent mechanism, binds to mRNA upstream of the exon-junction complex (EJC) and is recruited in a splicing- and cap-dependent manner to a region near the 5' end of the mRNA where it functions in mRNA export to the cytoplasm via the TAP/NXF1 pathway. Associates with DDX39B, which facilitates RNA binding of DDX39B and likely plays a role in mRNA export. This is SAP domain-containing ribonucleoprotein (Sarnp) from Rattus norvegicus (Rat).